The following is a 133-amino-acid chain: Small ribosomal subunit protein uS8 (133 aa).

The segment at 1–30 is disordered; that stretch reads MANHDPISDMLTRIRNASEKRHETTKVPAS. A compositionally biased stretch (basic and acidic residues) spans 16–25; it reads NASEKRHETT.

This sequence belongs to the universal ribosomal protein uS8 family. As to quaternary structure, part of the 30S ribosomal subunit. Contacts proteins S5 and S12.

Its function is as follows. One of the primary rRNA binding proteins, it binds directly to 16S rRNA central domain where it helps coordinate assembly of the platform of the 30S subunit. This chain is Small ribosomal subunit protein uS8, found in Synechococcus sp. (strain CC9902).